Consider the following 213-residue polypeptide: ATP-dependent Clp protease proteolytic subunit 3 (213 aa).

S107 (nucleophile) is an active-site residue. Residue H132 is part of the active site.

It belongs to the peptidase S14 family. In terms of assembly, fourteen ClpP subunits assemble into 2 heptameric rings which stack back to back to give a disk-like structure with a central cavity, resembling the structure of eukaryotic proteasomes.

It is found in the cytoplasm. It catalyses the reaction Hydrolysis of proteins to small peptides in the presence of ATP and magnesium. alpha-casein is the usual test substrate. In the absence of ATP, only oligopeptides shorter than five residues are hydrolyzed (such as succinyl-Leu-Tyr-|-NHMec, and Leu-Tyr-Leu-|-Tyr-Trp, in which cleavage of the -Tyr-|-Leu- and -Tyr-|-Trp bonds also occurs).. Its function is as follows. Cleaves peptides in various proteins in a process that requires ATP hydrolysis. Has a chymotrypsin-like activity. Plays a major role in the degradation of misfolded proteins. This chain is ATP-dependent Clp protease proteolytic subunit 3, found in Frankia casuarinae (strain DSM 45818 / CECT 9043 / HFP020203 / CcI3).